Here is a 228-residue protein sequence, read N- to C-terminus: Cytidylate kinase (228 aa).

10–18 serves as a coordination point for ATP; that stretch reads GPSGSGKGT.

The protein belongs to the cytidylate kinase family. Type 1 subfamily.

The protein localises to the cytoplasm. It carries out the reaction CMP + ATP = CDP + ADP. It catalyses the reaction dCMP + ATP = dCDP + ADP. The protein is Cytidylate kinase of Acinetobacter baumannii (strain AB0057).